Consider the following 391-residue polypeptide: Oocyte zinc finger protein XlCOF7.2 (391 aa).

4 C2H2-type zinc fingers span residues 284 to 306 (FPCS…YRTH), 312 to 334 (YPCS…RRIH), 340 to 362 (SSCS…HRTH), and 368 to 391 (YSCS…RRTH).

Belongs to the krueppel C2H2-type zinc-finger protein family.

Its subcellular location is the nucleus. Its function is as follows. May be involved in transcriptional regulation. The protein is Oocyte zinc finger protein XlCOF7.2 of Xenopus laevis (African clawed frog).